The chain runs to 234 residues: Thymidylate kinase (234 aa).

An ATP-binding site is contributed by 21–28; the sequence is GGEGTGKS.

It belongs to the thymidylate kinase family.

The catalysed reaction is dTMP + ATP = dTDP + ADP. Phosphorylation of dTMP to form dTDP in both de novo and salvage pathways of dTTP synthesis. The polypeptide is Thymidylate kinase (Rhizobium meliloti (strain 1021) (Ensifer meliloti)).